A 214-amino-acid chain; its full sequence is Homologous-pairing protein 2 homolog (214 aa).

Positions 79–147 (SDSELKDLDA…EHKLTNIKSA (69 aa)) form a coiled coil. The DNA-binding stretch occupies residues 115 to 179 (TSSLTTEEML…WKKRKRMATD (65 aa)).

It belongs to the HOP2 family.

It localises to the nucleus. Functionally, plays an important role in meiotic recombination. Stimulates DMC1-mediated strand exchange required for pairing of homologous chromosomes during meiosis. This is Homologous-pairing protein 2 homolog (psmc3ip) from Xenopus laevis (African clawed frog).